A 568-amino-acid chain; its full sequence is U6 small nuclear RNA (adenine-(43)-N(6))-methyltransferase (568 aa).

Residues 1–20 (MSEIDTNDIKKEMDNKNYRD) form a disordered region. Over residues 7-20 (NDIKKEMDNKNYRD) the composition is skewed to basic and acidic residues. The S-adenosyl-L-methionine site is built by arginine 117, glycine 151, aspartate 175, and asparagine 250. Disordered stretches follow at residues 363-383 (KENN…INNN), 403-431 (NLDS…NNNN), and 503-538 (DPKI…NKNN). Composition is skewed to low complexity over residues 365 to 383 (NNNI…INNN), 409 to 431 (NNNN…NNNN), and 507 to 538 (NNNN…NKNN).

Belongs to the methyltransferase superfamily. METTL16/RlmF family.

The catalysed reaction is adenosine in U6 snRNA + S-adenosyl-L-methionine = N(6)-methyladenosine in U6 snRNA + S-adenosyl-L-homocysteine + H(+). In terms of biological role, RNA N6-methyltransferase that mediates N6-methylation of adenine of U6 small nuclear RNA (U6 snRNA). The chain is U6 small nuclear RNA (adenine-(43)-N(6))-methyltransferase from Dictyostelium discoideum (Social amoeba).